The sequence spans 1326 residues: Paired amphipathic helix protein Sin3-like 4 (1326 aa).

3 PAH domains span residues 8–78, 95–165, and 292–367; these read QKLT…LPKG, KPVE…LPDT, and IPSS…LAQC. Disordered regions lie at residues 272–299, 715–812, 844–864, and 927–1000; these read DDDS…STYD, VPSR…RAET, SVAG…TEEL, and SKSK…EGDM. A compositionally biased stretch (basic and acidic residues) spans 721–737; it reads GAEDREDAVKSTNHDRE. 4 stretches are compositionally biased toward polar residues: residues 744–757, 781–805, 844–861, and 942–961; these read SPQN…SMRS, SSKT…NLTT, SVAG…TSGT, and PRSS…SGTD. A compositionally biased stretch (basic and acidic residues) spans 967 to 981; it reads DCYREDDIDHNKVES.

The protein localises to the nucleus. In terms of biological role, acts as a transcriptional repressor. Plays roles in regulating gene expression and genome stability. This chain is Paired amphipathic helix protein Sin3-like 4 (SNL4), found in Arabidopsis thaliana (Mouse-ear cress).